We begin with the raw amino-acid sequence, 338 residues long: Ketol-acid reductoisomerase (NADP(+)) (338 aa).

The region spanning 1–181 (MKVFYDKDCD…GGGRTGIIET (181 aa)) is the KARI N-terminal Rossmann domain. NADP(+) contacts are provided by residues 24 to 27 (YGSQ), R47, S50, T52, and 82 to 85 (DEFQ). Residue H107 is part of the active site. An NADP(+)-binding site is contributed by G133. Positions 182-327 (TFKDETETDL…EQLRSMMPWI (146 aa)) constitute a KARI C-terminal knotted domain. Mg(2+)-binding residues include D190, E194, E226, and E230. S251 is a substrate binding site.

This sequence belongs to the ketol-acid reductoisomerase family. The cofactor is Mg(2+).

It catalyses the reaction (2R)-2,3-dihydroxy-3-methylbutanoate + NADP(+) = (2S)-2-acetolactate + NADPH + H(+). The enzyme catalyses (2R,3R)-2,3-dihydroxy-3-methylpentanoate + NADP(+) = (S)-2-ethyl-2-hydroxy-3-oxobutanoate + NADPH + H(+). Its pathway is amino-acid biosynthesis; L-isoleucine biosynthesis; L-isoleucine from 2-oxobutanoate: step 2/4. It participates in amino-acid biosynthesis; L-valine biosynthesis; L-valine from pyruvate: step 2/4. Involved in the biosynthesis of branched-chain amino acids (BCAA). Catalyzes an alkyl-migration followed by a ketol-acid reduction of (S)-2-acetolactate (S2AL) to yield (R)-2,3-dihydroxy-isovalerate. In the isomerase reaction, S2AL is rearranged via a Mg-dependent methyl migration to produce 3-hydroxy-3-methyl-2-ketobutyrate (HMKB). In the reductase reaction, this 2-ketoacid undergoes a metal-dependent reduction by NADPH to yield (R)-2,3-dihydroxy-isovalerate. The polypeptide is Ketol-acid reductoisomerase (NADP(+)) (Pseudomonas putida (strain ATCC 700007 / DSM 6899 / JCM 31910 / BCRC 17059 / LMG 24140 / F1)).